The primary structure comprises 506 residues: DEAD-box ATP-dependent RNA helicase CshA (506 aa).

The Q motif motif lies at 2–30 (QNFKELGISDNTVQSLESMGFKEPTPIQK). The region spanning 33–203 (IPYALQGIDI…QQFMKSPKII (171 aa)) is the Helicase ATP-binding domain. Residue 46 to 53 (AQTGTGKT) participates in ATP binding. A DEAD box motif is present at residues 150 to 153 (DEAD). A Helicase C-terminal domain is found at 214-375 (QIEEFYTIVK…LRPPHRKEVL (162 aa)). Positions 436 to 506 (EKPLSRKGRN…KGRTFADHQK (71 aa)) are disordered. The segment covering 468–480 (KRSKGYSSKKKST) has biased composition (basic residues).

Belongs to the DEAD box helicase family. CshA subfamily. Oligomerizes, may be a member of the RNA degradosome.

The protein resides in the cytoplasm. The catalysed reaction is ATP + H2O = ADP + phosphate + H(+). Functionally, DEAD-box RNA helicase possibly involved in RNA degradation. Unwinds dsRNA in both 5'- and 3'-directions, has RNA-dependent ATPase activity. This chain is DEAD-box ATP-dependent RNA helicase CshA, found in Staphylococcus aureus (strain MW2).